A 190-amino-acid chain; its full sequence is GTP cyclohydrolase 1 (190 aa).

Positions 75, 78, and 146 each coordinate Zn(2+).

The protein belongs to the GTP cyclohydrolase I family. As to quaternary structure, homomer.

The catalysed reaction is GTP + H2O = 7,8-dihydroneopterin 3'-triphosphate + formate + H(+). The protein operates within cofactor biosynthesis; 7,8-dihydroneopterin triphosphate biosynthesis; 7,8-dihydroneopterin triphosphate from GTP: step 1/1. The sequence is that of GTP cyclohydrolase 1 from Campylobacter jejuni subsp. jejuni serotype O:6 (strain 81116 / NCTC 11828).